Here is a 1074-residue protein sequence, read N- to C-terminus: Pleckstrin homology domain-containing family M member 1 (1074 aa).

Residues 40–182 form the RUN domain; that stretch reads TSEDGDANTM…LSFELSYKSA (143 aa). 3 disordered regions span residues 214-244, 272-336, and 382-454; these read QRKESLDSISHSSGSEDIEVQHSGHKIRRNR, LQEN…MFQT, and DEKQ…PPQE. A Phosphoserine modification is found at S218. 2 stretches are compositionally biased toward polar residues: residues 313–329 and 393–404; these read SKAQVNSAPSSGPNQEP and PAQSTSDQQPSS. Residues S433, S436, and S491 each carry the phosphoserine modification. Residues 506–526 form a disordered region; the sequence is GNAQPAPAPAPAPAPAPAPAP. Pro residues predominate over residues 511–525; sequence APAPAPAPAPAPAPA. Positions 551–642 constitute a PH 1 domain; it reads GLMKLGTVAR…WLDRVREALQ (92 aa). An LIR motif is present at residues 649–655; sequence EDEWVNI. Residues 661 to 680 form a disordered region; it reads AEDAPEAPPDSLPPYSTLLP. Residues 672 to 1074 are interaction with RAB7A; sequence LPPYSTLLPE…RKYQEQNVVS (403 aa). Residues 701–795 enclose the PH 2 domain; it reads DAIKESLLYL…WRDLVRKVLA (95 aa). The Phorbol-ester/DAG-type zinc finger occupies 1004-1058; that stretch reads QHVYHCDLCTQRGFICQICHHQDIIFPFEFDTTVRCAECRTVFHQSCQAVVRKGC.

In terms of assembly, interacts (via N- and C-terminus) with RAB7A (GTP-bound form). Simultaneously interacts with RAB7A and ARL8B; bringing about clustering and fusion of late endosomes and lysosomes. Interacts (via RUN domain) with ARL8B (GTP-bound form); the interaction is required for PLEKHM1 localization to lysosomes and for ARL8B function in delivery and degradation of endocytic and autophagic cargo in lysosomes. PLEKHM1 and PLEKHM2 compete for interaction with ARL8B. Interacts with ARL8A; the interaction is weaker than with ARL8B. Interacts with VPS41, VPS11, VPS18, VPS33A and VPS39; indicative for an association with the HOPS complex; the interactions with, at least, VPS41, VPS11, VPS18 and VPS33A require ARL8B. Interacts with GABARAP, GABARAPL, GABARAPL2, MAP1LC3A, MAP1LC3B and MAP1LC3C. Interacts with PAFAH1B. Interacts (via N- and C-terminus) with NDEL1. Interacts (via C-terminus) with MAP3K7. Interacts (via N- and C-terminus) with FAM98A. Interacts (via C-terminus) with DEF8; this interaction is weak but increased in a RAB7A-dependent manner. May interact with sialyl-lex-positive protein.

Its subcellular location is the autolysosome membrane. The protein localises to the endosome membrane. The protein resides in the late endosome membrane. It is found in the lysosome membrane. Functionally, acts as a multivalent adapter protein that regulates Rab7-dependent and HOPS complex-dependent fusion events in the endolysosomal system and couples autophagic and the endocytic trafficking pathways. Acts as a dual effector of RAB7A and ARL8B that simultaneously binds these GTPases, bringing about clustering and fusion of late endosomes and lysosomes. Required for late stages of endolysosomal maturation, facilitating both endocytosis-mediated degradation of growth factor receptors and autophagosome clearance. Interaction with Arl8b is a crucial factor in the terminal maturation of autophagosomes and to mediate autophagosome-lysosome fusion. Positively regulates lysosome peripheral distribution and ruffled border formation in osteoclasts. May be involved in negative regulation of endocytic transport from early endosome to late endosome/lysosome implicating its association with Rab7. May have a role in sialyl-lex-mediated transduction of apoptotic signals. Involved in bone resorption. The chain is Pleckstrin homology domain-containing family M member 1 from Mus musculus (Mouse).